Reading from the N-terminus, the 588-residue chain is Myc box-dependent-interacting protein 1 (588 aa).

Ala2 carries the N-acetylalanine modification. The interval Ala2–Ala122 is interaction with BIN2. Coiled-coil stretches lie at residues Ala15–Glu42 and His193–His274. The 248-residue stretch at Val29 to Ser276 folds into the BAR domain. The disordered stretch occupies residues Phe279–Lys355. A phosphoserine mark is found at Ser296, Ser298, and Ser304. Phosphothreonine is present on Thr308. Phosphoserine is present on residues Ser324 and Ser332. Residues Phe379–Glu422 are clathrin-binding. The segment at Pro448–Ser483 is disordered. Over residues Glu474–Ser483 the composition is skewed to low complexity. In terms of domain architecture, SH3 spans Gly515–Gln588.

Heterodimer with AMPH. Binds SH3GLB1. Interacts (via SH3 domain) with DNM1. Interacts with SYNJ1. Interacts (via SH3 domain) with DNM2. Interacts with CLTC. Interacts with AP2A2. Interacts with AP2B1. Interacts with MYC (via N-terminal transactivation domain); the interaction requires the integrity of the conserved MYC box regions 1 and 2. Interacts with BIN2. Interacts with SNX4. Interacts (via BAR domain) with BACE1. Binds (via BAR domain) F-actin. Post-translationally, phosphorylated by protein kinase C. In terms of tissue distribution, highly expressed in the brain and muscle. Isoform AMPH2-1 is expressed only in the brain where it is concentrated in axon initial segments and nodes of Ranvier. Isoform AMPH2-2 is widely expressed.

It is found in the nucleus. The protein resides in the cytoplasm. It localises to the endosome. Its subcellular location is the cell membrane. The protein localises to the sarcolemma. It is found in the T-tubule. Functionally, is a key player in the control of plasma membrane curvature, and membrane shaping and remodeling. Required in muscle cells for the formation of T-tubules, tubular invaginations of the plasma membrane that function in depolarization-contraction coupling. Required in muscle cells for the formation of T-tubules, tubular invaginations of the plasma membrane that function in depolarization-contraction coupling. Is a negative regulator of endocytosis. Is also involved in the regulation of intracellular vesicles sorting, modulation of BACE1 trafficking and the control of amyloid-beta production. In neuronal circuits, endocytosis regulation may influence the internalization of PHF-tau aggregates. May be involved in the regulation of MYC activity and the control cell proliferation. This Rattus norvegicus (Rat) protein is Myc box-dependent-interacting protein 1 (Bin1).